A 500-amino-acid polypeptide reads, in one-letter code: Hexokinase-3 (500 aa).

The helical transmembrane segment at 4-24 (VGLGVAVGCAAVTCAIAAALV) threads the bilayer. The region spanning 35 to 487 (RRAVALLREF…SGVGAALLAA (453 aa)) is the Hexokinase domain. The tract at residues 90-222 (SGSEEGVYYS…GLNVRVTALV (133 aa)) is hexokinase small subdomain. Gly-104, Thr-105, and Asn-106 together coordinate ADP. Residues Thr-188, Lys-189, Asn-223, and Asp-224 each contribute to the D-glucose site. Positions 223–476 (NDTVGTLALG…RNVTLRVTED (254 aa)) are hexokinase large subdomain. Ser-247 lines the ADP pocket. D-glucose-binding residues include Asn-250, Glu-278, and Glu-309. Gly-441 serves as a coordination point for ADP.

This sequence belongs to the hexokinase family. As to expression, expressed in roots, leaves, flowers, immature seeds and seed coat. Expressed in young shoots, tiller buds, endosperm seven days after fertilization, and interconnecting tissues such as pulvini and nodes.

Its subcellular location is the mitochondrion outer membrane. It carries out the reaction a D-hexose + ATP = a D-hexose 6-phosphate + ADP + H(+). The enzyme catalyses D-fructose + ATP = D-fructose 6-phosphate + ADP + H(+). The catalysed reaction is D-glucose + ATP = D-glucose 6-phosphate + ADP + H(+). It participates in carbohydrate metabolism; hexose metabolism. Its pathway is carbohydrate degradation; glycolysis; D-glyceraldehyde 3-phosphate and glycerone phosphate from D-glucose: step 1/4. In terms of biological role, fructose and glucose phosphorylating enzyme. Involved in the regulation of cell expansion in spikelet hulls, grain size, and gibberellin biosynthesis and homeostasis. The protein is Hexokinase-3 of Oryza sativa subsp. japonica (Rice).